A 295-amino-acid chain; its full sequence is Bifunctional protein FolD (295 aa).

Residues 166–168, serine 191, and isoleucine 232 contribute to the NADP(+) site; that span reads GRS.

The protein belongs to the tetrahydrofolate dehydrogenase/cyclohydrolase family. In terms of assembly, homodimer.

It catalyses the reaction (6R)-5,10-methylene-5,6,7,8-tetrahydrofolate + NADP(+) = (6R)-5,10-methenyltetrahydrofolate + NADPH. It carries out the reaction (6R)-5,10-methenyltetrahydrofolate + H2O = (6R)-10-formyltetrahydrofolate + H(+). The protein operates within one-carbon metabolism; tetrahydrofolate interconversion. Functionally, catalyzes the oxidation of 5,10-methylenetetrahydrofolate to 5,10-methenyltetrahydrofolate and then the hydrolysis of 5,10-methenyltetrahydrofolate to 10-formyltetrahydrofolate. The polypeptide is Bifunctional protein FolD (Wolbachia sp. subsp. Brugia malayi (strain TRS)).